The primary structure comprises 55 residues: Photosystem II reaction center protein K (55 aa).

A propeptide spanning residues 1 to 18 (MFYIHLENTFDLSSTILV) is cleaved from the precursor. The helical transmembrane segment at 26 to 46 (IFDPIVDVMPIIPLFFFLLAF) threads the bilayer.

Belongs to the PsbK family. As to quaternary structure, PSII is composed of 1 copy each of membrane proteins PsbA, PsbB, PsbC, PsbD, PsbE, PsbF, PsbH, PsbI, PsbJ, PsbK, PsbL, PsbM, PsbT, PsbX, PsbY, PsbZ, Psb30/Ycf12, at least 3 peripheral proteins of the oxygen-evolving complex and a large number of cofactors. It forms dimeric complexes.

The protein resides in the plastid. It localises to the chloroplast thylakoid membrane. In terms of biological role, one of the components of the core complex of photosystem II (PSII). PSII is a light-driven water:plastoquinone oxidoreductase that uses light energy to abstract electrons from H(2)O, generating O(2) and a proton gradient subsequently used for ATP formation. It consists of a core antenna complex that captures photons, and an electron transfer chain that converts photonic excitation into a charge separation. The chain is Photosystem II reaction center protein K from Anthoceros angustus (Hornwort).